The primary structure comprises 394 residues: Phosphopentomutase (394 aa).

Residues D13, D286, H291, D327, H328, and H339 each coordinate Mn(2+).

The protein belongs to the phosphopentomutase family. Mn(2+) is required as a cofactor.

The protein resides in the cytoplasm. It carries out the reaction 2-deoxy-alpha-D-ribose 1-phosphate = 2-deoxy-D-ribose 5-phosphate. The enzyme catalyses alpha-D-ribose 1-phosphate = D-ribose 5-phosphate. The protein operates within carbohydrate degradation; 2-deoxy-D-ribose 1-phosphate degradation; D-glyceraldehyde 3-phosphate and acetaldehyde from 2-deoxy-alpha-D-ribose 1-phosphate: step 1/2. Isomerase that catalyzes the conversion of deoxy-ribose 1-phosphate (dRib-1-P) and ribose 1-phosphate (Rib-1-P) to deoxy-ribose 5-phosphate (dRib-5-P) and ribose 5-phosphate (Rib-5-P), respectively. In Bacillus cereus (strain G9842), this protein is Phosphopentomutase.